Here is a 313-residue protein sequence, read N- to C-terminus: Syndecan-1 (313 aa).

A signal peptide spans 1-22; sequence MRRAALWLWLCALALRLQPALP. Over 23 to 257 the chain is Extracellular; the sequence is QIVTANVPPE…GLLDRKEVLG (235 aa). Disordered stretches follow at residues 27–58 and 95–186; these read ANVP…MTLS and AGEK…VEDG. The segment covering 32–42 has biased composition (acidic residues); it reads EDQDGSGDDSD. O-linked (Xyl...) (chondroitin sulfate) serine glycosylation is present at Ser-37. N-linked (GlcNAc...) asparagine glycosylation is present at Asn-43. O-linked (Xyl...) (heparan sulfate) serine glycans are attached at residues Ser-45 and Ser-47. A compositionally biased stretch (basic and acidic residues) spans 97–129; sequence EKPEEGEPVAHVEAEPDFTARDKEKEATTRPRE. The span at 135–154 shows a compositional bias: low complexity; that stretch reads VTQQASTAARATTAQASVTS. Ser-209 and Ser-219 each carry an O-linked (Xyl...) (chondroitin sulfate) serine glycan. A helical membrane pass occupies residues 258–278; it reads GVIAGGLVGLIFAVCLVAFML. The Cytoplasmic segment spans residues 279–313; sequence YRMKKKDEGSYSLEEPKQANGGAYQKPTKQEEFYA. A compositionally biased stretch (basic and acidic residues) spans 286 to 295; that stretch reads EGSYSLEEPK. A disordered region spans residues 286–313; it reads EGSYSLEEPKQANGGAYQKPTKQEEFYA. Ser-288 is modified (phosphoserine).

It belongs to the syndecan proteoglycan family. In terms of assembly, interacts with CDCP1. Interacts (via C-terminus) with TIAM1 (via PDZ domain). Interacts with MDK. In terms of processing, shedding is enhanced by a number of factors such as heparanase, thrombin or EGF. Also by stress and wound healing. PMA-mediated shedding is inhibited by TIMP3.

Its subcellular location is the membrane. The protein resides in the secreted. The protein localises to the extracellular exosome. Functionally, cell surface proteoglycan that contains both heparan sulfate and chondroitin sulfate and that links the cytoskeleton to the interstitial matrix. Regulates exosome biogenesis in concert with SDCBP and PDCD6IP. Able to induce its own expression in dental mesenchymal cells and also in the neighboring dental epithelial cells via an MSX1-mediated pathway. In Rattus norvegicus (Rat), this protein is Syndecan-1.